A 322-amino-acid polypeptide reads, in one-letter code: Reticulocalbin-1 (322 aa).

An N-terminal signal peptide occupies residues 1-19 (MDVLGFICAVFLGTVVLHA). An N-linked (GlcNAc...) asparagine glycan is attached at N44. EF-hand domains follow at residues 70–105 (ESKD…VQKR), 106–141 (YVYE…YYLS), 157–192 (KMLP…EEFE), 194–229 (MKDI…HEDR), 235–270 (WVKT…QDYD), and 271–306 (HAQA…FVGS). 29 residues coordinate Ca(2+): D83, D85, N87, Y89, E94, D119, N121, D123, K125, E130, D170, D172, D174, E181, D207, N209, D211, H213, E218, D248, N250, D252, K254, E259, D284, D286, D288, M290, and E295. The Prevents secretion from ER signature appears at 319 to 322 (HDEL).

This sequence belongs to the CREC family.

Its subcellular location is the endoplasmic reticulum lumen. In terms of biological role, may regulate calcium-dependent activities in the endoplasmic reticulum lumen or post-ER compartment. This is Reticulocalbin-1 (rcn1) from Takifugu rubripes (Japanese pufferfish).